We begin with the raw amino-acid sequence, 261 residues long: Carbonic anhydrase 1 (261 aa).

Alanine 2 is subject to N-acetylalanine. In terms of domain architecture, Alpha-carbonic anhydrase spans 4–261 (ADWGYGSENG…LKGRTVRASF (258 aa)). Residue histidine 65 is the Proton donor/acceptor of the active site. 3 residues coordinate Zn(2+): histidine 95, histidine 97, and histidine 120. Substrate-binding positions include threonine 200 and 200–201 (TH). The disordered stretch occupies residues 239 to 261 (AVPVLSNHRPPQPLKGRTVRASF).

The protein belongs to the alpha-carbonic anhydrase family. Zn(2+) serves as cofactor.

It is found in the cytoplasm. The catalysed reaction is hydrogencarbonate + H(+) = CO2 + H2O. It carries out the reaction urea = cyanamide + H2O. Inhibited by acetazolamide. Catalyzes the reversible hydration of carbon dioxide. Can hydrate cyanamide to urea. This Mus musculus (Mouse) protein is Carbonic anhydrase 1 (Ca1).